The primary structure comprises 537 residues: Interleukin-2 receptor subunit beta (537 aa).

An N-terminal signal peptide occupies residues 1–26 (MATVDLSWRLPLYILLLLLATTWVSA). Topologically, residues 27-239 (AVNDCSHLKC…FRTRPADPKE (213 aa)) are extracellular. Cys36 and Cys46 form a disulfide bridge. N-linked (GlcNAc...) asparagine glycosylation is found at Asn43, Asn55, and Asn71. Cys74 and Cys86 are joined by a disulfide. A Fibronectin type-III domain is found at 135–235 (APHSLQVLHI…QPMAFRTRPA (101 aa)). N-linked (GlcNAc...) asparagine glycosylation occurs at Asn150. The short motif at 221–225 (WSPWS) is the WSXWS motif element. Residues 240 to 267 (IFPLPWLRCLLLVLGCFFGFLSCVCVLV) form a helical membrane-spanning segment. Topologically, residues 268–537 (KCRYLGPWLK…LQAQDSAHLI (270 aa)) are cytoplasmic. A Box 1 motif motif is present at residues 280–288 (LKCHIPDPS). Disordered stretches follow at residues 442-466 (AYGN…SLAS) and 479-498 (ELGD…QASV). Residues 487-497 (MSTNSSGQQAS) are compositionally biased toward polar residues.

This sequence belongs to the type I cytokine receptor family. Type 4 subfamily. As to quaternary structure, non-covalent dimer of an alpha and a beta subunit. IL2R exists in 3 different forms: a high affinity dimer, an intermediate affinity monomer (beta subunit), and a low affinity monomer (alpha subunit). The high and intermediate affinity forms also associate with a gamma subunit. Interacts with SHB upon interleukin stimulation.

It is found in the cell membrane. The protein resides in the cell surface. Functionally, receptor for interleukin-2. This beta subunit is involved in receptor mediated endocytosis and transduces the mitogenic signals of IL2. Probably in association with IL15RA, involved in the stimulation of neutrophil phagocytosis by IL15. The sequence is that of Interleukin-2 receptor subunit beta (Il2rb) from Rattus norvegicus (Rat).